We begin with the raw amino-acid sequence, 764 residues long: 1,4-alpha-glucan branching enzyme GlgB (764 aa).

The disordered stretch occupies residues 1 to 46 (MSAARQPSPTVRDKAAPEPAAPAAPKGARAPRARRAAPPHGVRPAP). The segment covering 17 to 28 (PEPAAPAAPKGA) has biased composition (low complexity). Aspartate 440 serves as the catalytic Nucleophile. The Proton donor role is filled by glutamate 493.

It belongs to the glycosyl hydrolase 13 family. GlgB subfamily. Monomer.

The catalysed reaction is Transfers a segment of a (1-&gt;4)-alpha-D-glucan chain to a primary hydroxy group in a similar glucan chain.. The protein operates within glycan biosynthesis; glycogen biosynthesis. In terms of biological role, catalyzes the formation of the alpha-1,6-glucosidic linkages in glycogen by scission of a 1,4-alpha-linked oligosaccharide from growing alpha-1,4-glucan chains and the subsequent attachment of the oligosaccharide to the alpha-1,6 position. The protein is 1,4-alpha-glucan branching enzyme GlgB (glgB) of Kitasatospora aureofaciens (Streptomyces aureofaciens).